The chain runs to 351 residues: Glycerol-3-phosphate dehydrogenase 1-like protein (351 aa).

NAD(+) is bound at residue Gly12–Gly17. Residue Lys122 participates in substrate binding. Ala155 provides a ligand contact to NAD(+). The active-site Proton acceptor is the Lys206. The NAD(+) site is built by Arg271, Lys298, and Gln300. Position 271 to 272 (Arg271 to Asn272) interacts with substrate.

Belongs to the NAD-dependent glycerol-3-phosphate dehydrogenase family. As to quaternary structure, interacts with SCN5A.

It localises to the cytoplasm. The catalysed reaction is sn-glycerol 3-phosphate + NAD(+) = dihydroxyacetone phosphate + NADH + H(+). In terms of biological role, plays a role in regulating cardiac sodium current; decreased enzymatic activity with resulting increased levels of glycerol 3-phosphate activating the DPD1L-dependent SCN5A phosphorylation pathway, may ultimately lead to decreased sodium current; cardiac sodium current may also be reduced due to alterations of NAD(H) balance induced by DPD1L. This chain is Glycerol-3-phosphate dehydrogenase 1-like protein (Gpd1l), found in Mus musculus (Mouse).